The primary structure comprises 234 residues: tRNA1(Val) (adenine(37)-N6)-methyltransferase (234 aa).

Belongs to the methyltransferase superfamily. tRNA (adenine-N(6)-)-methyltransferase family.

It localises to the cytoplasm. It carries out the reaction adenosine(37) in tRNA1(Val) + S-adenosyl-L-methionine = N(6)-methyladenosine(37) in tRNA1(Val) + S-adenosyl-L-homocysteine + H(+). Its function is as follows. Specifically methylates the adenine in position 37 of tRNA(1)(Val) (anticodon cmo5UAC). The chain is tRNA1(Val) (adenine(37)-N6)-methyltransferase from Pedobacter heparinus (strain ATCC 13125 / DSM 2366 / CIP 104194 / JCM 7457 / NBRC 12017 / NCIMB 9290 / NRRL B-14731 / HIM 762-3).